Here is a 67-residue protein sequence, read N- to C-terminus: Large ribosomal subunit protein uL29 (67 aa).

This sequence belongs to the universal ribosomal protein uL29 family.

This chain is Large ribosomal subunit protein uL29 (rpmC), found in Halalkalibacterium halodurans (strain ATCC BAA-125 / DSM 18197 / FERM 7344 / JCM 9153 / C-125) (Bacillus halodurans).